Consider the following 198-residue polypeptide: Recombination protein RecR (198 aa).

The segment at 57-72 (CSECGHITEQDPCYIC) adopts a C4-type zinc-finger fold. A Toprim domain is found at 80 to 175 (SVICVVEDDK…TVTRLAQGLS (96 aa)).

The protein belongs to the RecR family.

In terms of biological role, may play a role in DNA repair. It seems to be involved in an RecBC-independent recombinational process of DNA repair. It may act with RecF and RecO. The chain is Recombination protein RecR from Staphylococcus saprophyticus subsp. saprophyticus (strain ATCC 15305 / DSM 20229 / NCIMB 8711 / NCTC 7292 / S-41).